The primary structure comprises 230 residues: Cytochrome c oxidase subunit 2 (230 aa).

Residues 1–14 (MAHPTQLGFQDAAS) are Mitochondrial intermembrane-facing. The helical transmembrane segment at 15–45 (PVMEELLHFHDHALMIVFLISALVLYVIITT) threads the bilayer. The Mitochondrial matrix segment spans residues 46–59 (VSTKLTNMYILDSQ). A helical transmembrane segment spans residues 60–87 (EIEIVWTVLPALILILIALPSLRILYLM). At 88 to 230 (DEINDPHLTI…NWSTLMLKDA (143 aa)) the chain is on the mitochondrial intermembrane side. Cu cation-binding residues include histidine 161, cysteine 196, glutamate 198, cysteine 200, histidine 204, and methionine 207. Glutamate 198 is a binding site for Mg(2+).

Belongs to the cytochrome c oxidase subunit 2 family. In terms of assembly, component of the cytochrome c oxidase (complex IV, CIV), a multisubunit enzyme composed of 14 subunits. The complex is composed of a catalytic core of 3 subunits MT-CO1, MT-CO2 and MT-CO3, encoded in the mitochondrial DNA, and 11 supernumerary subunits COX4I, COX5A, COX5B, COX6A, COX6B, COX6C, COX7A, COX7B, COX7C, COX8 and NDUFA4, which are encoded in the nuclear genome. The complex exists as a monomer or a dimer and forms supercomplexes (SCs) in the inner mitochondrial membrane with NADH-ubiquinone oxidoreductase (complex I, CI) and ubiquinol-cytochrome c oxidoreductase (cytochrome b-c1 complex, complex III, CIII), resulting in different assemblies (supercomplex SCI(1)III(2)IV(1) and megacomplex MCI(2)III(2)IV(2)). Found in a complex with TMEM177, COA6, COX18, COX20, SCO1 and SCO2. Interacts with TMEM177 in a COX20-dependent manner. Interacts with COX20. Interacts with COX16. The cofactor is Cu cation.

It is found in the mitochondrion inner membrane. It carries out the reaction 4 Fe(II)-[cytochrome c] + O2 + 8 H(+)(in) = 4 Fe(III)-[cytochrome c] + 2 H2O + 4 H(+)(out). Its function is as follows. Component of the cytochrome c oxidase, the last enzyme in the mitochondrial electron transport chain which drives oxidative phosphorylation. The respiratory chain contains 3 multisubunit complexes succinate dehydrogenase (complex II, CII), ubiquinol-cytochrome c oxidoreductase (cytochrome b-c1 complex, complex III, CIII) and cytochrome c oxidase (complex IV, CIV), that cooperate to transfer electrons derived from NADH and succinate to molecular oxygen, creating an electrochemical gradient over the inner membrane that drives transmembrane transport and the ATP synthase. Cytochrome c oxidase is the component of the respiratory chain that catalyzes the reduction of oxygen to water. Electrons originating from reduced cytochrome c in the intermembrane space (IMS) are transferred via the dinuclear copper A center (CU(A)) of subunit 2 and heme A of subunit 1 to the active site in subunit 1, a binuclear center (BNC) formed by heme A3 and copper B (CU(B)). The BNC reduces molecular oxygen to 2 water molecules using 4 electrons from cytochrome c in the IMS and 4 protons from the mitochondrial matrix. The chain is Cytochrome c oxidase subunit 2 (mt-co2) from Formosania lacustris (Oriental stream loach).